Consider the following 218-residue polypeptide: Ribose-5-phosphate isomerase A (218 aa).

Residues T28–T31, D81–D84, and K94–G97 contribute to the substrate site. E103 functions as the Proton acceptor in the catalytic mechanism. Position 121 (K121) interacts with substrate.

Belongs to the ribose 5-phosphate isomerase family. As to quaternary structure, homodimer.

It carries out the reaction aldehydo-D-ribose 5-phosphate = D-ribulose 5-phosphate. Its pathway is carbohydrate degradation; pentose phosphate pathway; D-ribose 5-phosphate from D-ribulose 5-phosphate (non-oxidative stage): step 1/1. In terms of biological role, catalyzes the reversible conversion of ribose-5-phosphate to ribulose 5-phosphate. This Blochmanniella pennsylvanica (strain BPEN) protein is Ribose-5-phosphate isomerase A.